We begin with the raw amino-acid sequence, 445 residues long: Adenylyltransferase and sulfurtransferase MOCS3 (445 aa).

The disordered stretch occupies residues 49 to 70 (LPPSAAAEVEPTGSPSSSSSAA). Residues Gly106, Asp127, 134–138 (DNLHR), Lys151, and 170–171 (NN) each bind ATP. The Zn(2+) site is built by Cys211 and Cys214. Residue Cys228 is the Glycyl thioester intermediate; for adenylyltransferase activity of the active site. Zn(2+)-binding residues include Cys286 and Cys289. The region spanning 342–443 (SGRPHLLVDV…WAKEVDPSFL (102 aa)) is the Rhodanese domain. Cys403 (cysteine persulfide intermediate; for sulfurtransferase activity) is an active-site residue.

This sequence in the N-terminal section; belongs to the HesA/MoeB/ThiF family. UBA4 subfamily. Zn(2+) is required as a cofactor.

The protein localises to the cytoplasm. It localises to the cytosol. The catalysed reaction is [molybdopterin-synthase sulfur-carrier protein]-C-terminal Gly-Gly + ATP + H(+) = [molybdopterin-synthase sulfur-carrier protein]-C-terminal Gly-Gly-AMP + diphosphate. It catalyses the reaction [molybdopterin-synthase sulfur-carrier protein]-C-terminal Gly-Gly-AMP + S-sulfanyl-L-cysteinyl-[cysteine desulfurase] + AH2 = [molybdopterin-synthase sulfur-carrier protein]-C-terminal-Gly-aminoethanethioate + L-cysteinyl-[cysteine desulfurase] + A + AMP + 2 H(+). It functions in the pathway tRNA modification; 5-methoxycarbonylmethyl-2-thiouridine-tRNA biosynthesis. The protein operates within cofactor biosynthesis; molybdopterin biosynthesis. Plays a central role in 2-thiolation of mcm(5)S(2)U at tRNA wobble positions of cytosolic tRNA(Lys), tRNA(Glu) and tRNA(Gln). Also essential during biosynthesis of the molybdenum cofactor. Acts by mediating the C-terminal thiocarboxylation of sulfur carriers URM1 and MOCS2A. Its N-terminus first activates URM1 and MOCS2A as acyl-adenylates (-COAMP), then the persulfide sulfur on the catalytic cysteine is transferred to URM1 and MOCS2A to form thiocarboxylation (-COSH) of their C-terminus. The reaction probably involves hydrogen sulfide that is generated from the persulfide intermediate and that acts as a nucleophile towards URM1 and MOCS2A. Subsequently, a transient disulfide bond is formed. Does not use thiosulfate as sulfur donor; NFS1 probably acting as a sulfur donor for thiocarboxylation reactions. In Oryza sativa subsp. japonica (Rice), this protein is Adenylyltransferase and sulfurtransferase MOCS3.